The following is a 127-amino-acid chain: Aspartate 1-decarboxylase (127 aa).

Residue S25 is the Schiff-base intermediate with substrate; via pyruvic acid of the active site. Residue S25 is modified to Pyruvic acid (Ser). T57 is a substrate binding site. The active-site Proton donor is the Y58. Substrate is bound at residue 73–75 (GAA).

It belongs to the PanD family. Heterooctamer of four alpha and four beta subunits. The cofactor is pyruvate. Post-translationally, is synthesized initially as an inactive proenzyme, which is activated by self-cleavage at a specific serine bond to produce a beta-subunit with a hydroxyl group at its C-terminus and an alpha-subunit with a pyruvoyl group at its N-terminus.

Its subcellular location is the cytoplasm. It carries out the reaction L-aspartate + H(+) = beta-alanine + CO2. It functions in the pathway cofactor biosynthesis; (R)-pantothenate biosynthesis; beta-alanine from L-aspartate: step 1/1. Catalyzes the pyruvoyl-dependent decarboxylation of aspartate to produce beta-alanine. In Bacillus subtilis (strain 168), this protein is Aspartate 1-decarboxylase.